Reading from the N-terminus, the 126-residue chain is Holo-[acyl-carrier-protein] synthase (126 aa).

Mg(2+) contacts are provided by Asp-9 and Glu-58.

It belongs to the P-Pant transferase superfamily. AcpS family. Requires Mg(2+) as cofactor.

Its subcellular location is the cytoplasm. The enzyme catalyses apo-[ACP] + CoA = holo-[ACP] + adenosine 3',5'-bisphosphate + H(+). Functionally, transfers the 4'-phosphopantetheine moiety from coenzyme A to a Ser of acyl-carrier-protein. This Vibrio vulnificus (strain YJ016) protein is Holo-[acyl-carrier-protein] synthase.